The chain runs to 134 residues: Profilin-2 (134 aa).

Cysteines 13 and 118 form a disulfide. An Involved in PIP2 interaction motif is present at residues 84 to 100 (AVIRGKKGSGGITIKKT). Thr-114 is subject to Phosphothreonine.

The protein belongs to the profilin family. In terms of assembly, occurs in many kinds of cells as a complex with monomeric actin in a 1:1 ratio. Phosphorylated by MAP kinases.

The protein resides in the cytoplasm. It is found in the cytoskeleton. Functionally, binds to actin and affects the structure of the cytoskeleton. At high concentrations, profilin prevents the polymerization of actin, whereas it enhances it at low concentrations. The chain is Profilin-2 from Olea europaea (Common olive).